The chain runs to 642 residues: Chaperone protein DnaK (642 aa).

Thr-198 carries the post-translational modification Phosphothreonine; by autocatalysis. Residues 602-642 are disordered; it reads AYAKMTEKQQSDDGAGTQNADHKEDDVVDADFEEVKSDKKD.

This sequence belongs to the heat shock protein 70 family.

Functionally, acts as a chaperone. This is Chaperone protein DnaK from Dichelobacter nodosus (strain VCS1703A).